Reading from the N-terminus, the 565-residue chain is Laccase-12 (565 aa).

The first 24 residues, 1–24, serve as a signal peptide directing secretion; sequence MTTVHTFSILLFFCSLFSASLIIA. 2 Plastocyanin-like domains span residues 32-148 and 158-310; these read VIQE…PTPG and RQTA…YKKT. N-linked (GlcNAc...) asparagine glycosylation is present at Asn78. 4 residues coordinate Cu cation: His82, His84, His127, and His129. Residues Asn187, Asn203, Asn298, Asn325, Asn377, Asn387, Asn395, and Asn428 are each glycosylated (N-linked (GlcNAc...) asparagine). The Plastocyanin-like 3 domain occupies 413–549; the sequence is DFPSKPPVKF…AMAFLVDNGV (137 aa). Positions 466, 469, 471, 528, 529, 530, and 534 each coordinate Cu cation.

The protein belongs to the multicopper oxidase family. Cu cation is required as a cofactor. In terms of tissue distribution, predominantly expressed in the inflorescence stem.

Its subcellular location is the secreted. It localises to the extracellular space. It is found in the apoplast. The catalysed reaction is 4 hydroquinone + O2 = 4 benzosemiquinone + 2 H2O. In terms of biological role, lignin degradation and detoxification of lignin-derived products. The protein is Laccase-12 (LAC12) of Arabidopsis thaliana (Mouse-ear cress).